The sequence spans 499 residues: ATP synthase subunit alpha (499 aa).

ATP is bound at residue 169–176 (GDRGTGKT).

This sequence belongs to the ATPase alpha/beta chains family. In terms of assembly, F-type ATPases have 2 components, CF(1) - the catalytic core - and CF(0) - the membrane proton channel. CF(1) has five subunits: alpha(3), beta(3), gamma(1), delta(1), epsilon(1). CF(0) has three main subunits: a(1), b(2) and c(9-12). The alpha and beta chains form an alternating ring which encloses part of the gamma chain. CF(1) is attached to CF(0) by a central stalk formed by the gamma and epsilon chains, while a peripheral stalk is formed by the delta and b chains.

It localises to the cell inner membrane. The catalysed reaction is ATP + H2O + 4 H(+)(in) = ADP + phosphate + 5 H(+)(out). Produces ATP from ADP in the presence of a proton gradient across the membrane. The alpha chain is a regulatory subunit. The chain is ATP synthase subunit alpha from Brachyspira hyodysenteriae (strain ATCC 49526 / WA1).